The sequence spans 349 residues: Sperm acrosomal protein FSA-ACR.1 (349 aa).

A signal peptide spans 1–8 (MKEVYLVG). A disordered region spans residues 1–265 (MKEVYLVGYA…EQPSGIPPSS (265 aa)). Positions 63–114 (TSGEHTSVEHASAEHSSTEHTSGEHASGEHTSGERATGEHTSSEHATSEHTS) are enriched in basic and acidic residues. 2 stretches are compositionally biased toward polar residues: residues 117–142 (QPSG…SGEQ) and 154–171 (SGEQ…TSGE). Basic and acidic residues predominate over residues 178–189 (PSGEHAVAEKPS). Residues 221–248 (EQASIEKASSEQASAEQASAEQASSEQA) show a composition bias toward low complexity. N-linked (GlcNAc...) asparagine glycosylation occurs at Asn-342.

This sequence to acrosomal proteins SP-10. In terms of tissue distribution, testis.

It localises to the cytoplasmic vesicle. The protein resides in the secretory vesicle. The protein localises to the acrosome. This chain is Sperm acrosomal protein FSA-ACR.1, found in Vulpes vulpes (Red fox).